The primary structure comprises 176 residues: ATP-dependent protease subunit HslV (176 aa).

Thr2 is a catalytic residue. Na(+) contacts are provided by Gly157, Cys160, and Thr163.

It belongs to the peptidase T1B family. HslV subfamily. In terms of assembly, a double ring-shaped homohexamer of HslV is capped on each side by a ring-shaped HslU homohexamer. The assembly of the HslU/HslV complex is dependent on binding of ATP.

It localises to the cytoplasm. The enzyme catalyses ATP-dependent cleavage of peptide bonds with broad specificity.. With respect to regulation, allosterically activated by HslU binding. In terms of biological role, protease subunit of a proteasome-like degradation complex believed to be a general protein degrading machinery. This is ATP-dependent protease subunit HslV from Pseudomonas syringae pv. tomato (strain ATCC BAA-871 / DC3000).